Consider the following 361-residue polypeptide: DNA replication and repair protein RecF (361 aa).

30–37 (GDNAQGKT) contacts ATP.

The protein belongs to the RecF family.

It localises to the cytoplasm. Its function is as follows. The RecF protein is involved in DNA metabolism; it is required for DNA replication and normal SOS inducibility. RecF binds preferentially to single-stranded, linear DNA. It also seems to bind ATP. The sequence is that of DNA replication and repair protein RecF from Clostridium botulinum (strain Alaska E43 / Type E3).